A 255-amino-acid polypeptide reads, in one-letter code: uncharacterized protein (255 aa).

Residues 4-72 (DPYSVLGVEK…KRRKHYDKTG (69 aa)) form the J domain. 2 stretches are compositionally biased toward basic residues: residues 167–178 (FAPNEKKRKRRA) and 243–255 (TKPK…RSKE). Disordered regions lie at residues 167-215 (FAPN…EEAL) and 230-255 (LISN…RSKE).

It belongs to the DnaJ family.

The protein resides in the nucleus. The protein localises to the nucleolus. This is an uncharacterized protein from Schizosaccharomyces pombe (strain 972 / ATCC 24843) (Fission yeast).